A 201-amino-acid chain; its full sequence is FMN-dependent NADH:quinone oxidoreductase (201 aa).

Position 92 to 95 (92 to 95 (MWNL)) interacts with FMN.

The protein belongs to the azoreductase type 1 family. In terms of assembly, homodimer. FMN serves as cofactor.

The enzyme catalyses 2 a quinone + NADH + H(+) = 2 a 1,4-benzosemiquinone + NAD(+). It carries out the reaction N,N-dimethyl-1,4-phenylenediamine + anthranilate + 2 NAD(+) = 2-(4-dimethylaminophenyl)diazenylbenzoate + 2 NADH + 2 H(+). Quinone reductase that provides resistance to thiol-specific stress caused by electrophilic quinones. Functionally, also exhibits azoreductase activity. Catalyzes the reductive cleavage of the azo bond in aromatic azo compounds to the corresponding amines. The chain is FMN-dependent NADH:quinone oxidoreductase from Caldicellulosiruptor saccharolyticus (strain ATCC 43494 / DSM 8903 / Tp8T 6331).